The sequence spans 485 residues: Glutamyl-tRNA(Gln) amidotransferase subunit A (485 aa).

Catalysis depends on charge relay system residues K79 and S154. S178 functions as the Acyl-ester intermediate in the catalytic mechanism.

Belongs to the amidase family. GatA subfamily. In terms of assembly, heterotrimer of A, B and C subunits.

It carries out the reaction L-glutamyl-tRNA(Gln) + L-glutamine + ATP + H2O = L-glutaminyl-tRNA(Gln) + L-glutamate + ADP + phosphate + H(+). Its function is as follows. Allows the formation of correctly charged Gln-tRNA(Gln) through the transamidation of misacylated Glu-tRNA(Gln) in organisms which lack glutaminyl-tRNA synthetase. The reaction takes place in the presence of glutamine and ATP through an activated gamma-phospho-Glu-tRNA(Gln). This chain is Glutamyl-tRNA(Gln) amidotransferase subunit A, found in Staphylococcus haemolyticus (strain JCSC1435).